A 204-amino-acid chain; its full sequence is N-(5'-phosphoribosyl)anthranilate isomerase (204 aa).

This sequence belongs to the TrpF family.

The enzyme catalyses N-(5-phospho-beta-D-ribosyl)anthranilate = 1-(2-carboxyphenylamino)-1-deoxy-D-ribulose 5-phosphate. It participates in amino-acid biosynthesis; L-tryptophan biosynthesis; L-tryptophan from chorismate: step 3/5. The polypeptide is N-(5'-phosphoribosyl)anthranilate isomerase (Oceanobacillus iheyensis (strain DSM 14371 / CIP 107618 / JCM 11309 / KCTC 3954 / HTE831)).